The chain runs to 293 residues: Formamidopyrimidine-DNA glycosylase (293 aa).

Pro-2 serves as the catalytic Schiff-base intermediate with DNA. The Proton donor role is filled by Glu-3. The Proton donor; for beta-elimination activity role is filled by Lys-60. Residues His-110, Arg-129, and Lys-174 each coordinate DNA. The segment at 259–293 (NVYRRTGKKCHACKNLIERQKISGRSTHWCRKCQK) adopts an FPG-type zinc-finger fold. Arg-283 (proton donor; for delta-elimination activity) is an active-site residue.

It belongs to the FPG family. As to quaternary structure, monomer. It depends on Zn(2+) as a cofactor.

It carries out the reaction Hydrolysis of DNA containing ring-opened 7-methylguanine residues, releasing 2,6-diamino-4-hydroxy-5-(N-methyl)formamidopyrimidine.. It catalyses the reaction 2'-deoxyribonucleotide-(2'-deoxyribose 5'-phosphate)-2'-deoxyribonucleotide-DNA = a 3'-end 2'-deoxyribonucleotide-(2,3-dehydro-2,3-deoxyribose 5'-phosphate)-DNA + a 5'-end 5'-phospho-2'-deoxyribonucleoside-DNA + H(+). Its function is as follows. Involved in base excision repair of DNA damaged by oxidation or by mutagenic agents. Acts as a DNA glycosylase that recognizes and removes damaged bases. Has a preference for oxidized purines, such as 7,8-dihydro-8-oxoguanine (8-oxoG). Has AP (apurinic/apyrimidinic) lyase activity and introduces nicks in the DNA strand. Cleaves the DNA backbone by beta-delta elimination to generate a single-strand break at the site of the removed base with both 3'- and 5'-phosphates. In Prochlorococcus marinus (strain MIT 9515), this protein is Formamidopyrimidine-DNA glycosylase.